We begin with the raw amino-acid sequence, 807 residues long: SWI/SNF complex subunit SWI3C (807 aa).

The interval 1-74 (MPASEDRRGK…DPGLGIGEVV (74 aa)) is disordered. The span at 28 to 54 (EEEDMEEEDEENNNNNNEEMDDVENAD) shows a compositional bias: acidic residues. In terms of domain architecture, SWIRM spans 176-274 (HVLPMHSDWF…YCATAQSHPG (99 aa)). The ZZ-type; degenerate zinc-finger motif lies at 340–394 (LCDSHCNHCSRPLPTVYFQSQKKGDILLCCDCFHHGRFVVGHSCLDFVRVDPMKF). 4 residues coordinate Zn(2+): C345, C348, C368, and C371. The SANT domain maps to 398–449 (QDGDNWTDQETLLLLEAVELYNENWVQIADHVGSKSKAQCILHFLRLPVEDG). 2 stretches are compositionally biased toward polar residues: residues 458-467 (GVTNTENPTN) and 552-569 (ENQQ…NGAE). 2 disordered regions span residues 458 to 487 (GVTN…SEQG) and 549 to 571 (LDGE…AEAQ). The stretch at 598 to 656 (ADHEEREIQRLSANIVNHQLKRMELKLKQFAEIETLLMKECEQVEKTRQRFSAERARML) forms a coiled coil. Low complexity-rich tracts occupy residues 692-703 (QHQQQQASATSQ) and 726-739 (QQQQ…QQQQ). Disordered stretches follow at residues 692–713 (QHQQ…FSNN), 721–740 (HFMA…QQQA), and 781–807 (SINQ…LGLN). The span at 798-807 (SGSGSGLGLN) shows a compositional bias: gly residues.

In terms of assembly, heterodimer. Interacts with SWI3A, SWI3B and BRM, but not with BSH. Interacts with MORC6 and SUVH9. In terms of tissue distribution, expressed in roots, stems, leaves, flowers and siliques.

Its subcellular location is the nucleus. In terms of biological role, component of a multiprotein complex equivalent of the SWI/SNF complex, an ATP-dependent chromatin-remodeling complex, which is required for the positive and negative regulation of gene expression of a large number of genes. It changes chromatin structure by altering DNA-histone contacts within a nucleosome, leading eventually to a change in nucleosome position, thus facilitating or repressing binding of gene-specific transcription factors. The polypeptide is SWI/SNF complex subunit SWI3C (SWI3C) (Arabidopsis thaliana (Mouse-ear cress)).